A 564-amino-acid polypeptide reads, in one-letter code: Bifunctional sesquiterpene synthase 1 (564 aa).

Asp317, Asp321, Asp461, and Glu469 together coordinate Mg(2+). Positions 317–321 match the DDXXD motif motif; sequence DDTFD.

It belongs to the terpene synthase family. Mg(2+) is required as a cofactor.

It carries out the reaction (2E,6E)-farnesyl diphosphate = alpha-copaene + diphosphate. The catalysed reaction is (2E,6E)-farnesyl diphosphate = delta-cadinene + diphosphate. Its pathway is secondary metabolite biosynthesis; terpenoid biosynthesis. Sesquiterpene synthase converting farnesyl diphosphate to alpha copaene and delta-cadinene as the major products. The polypeptide is Bifunctional sesquiterpene synthase 1 (Phyla dulcis (Aztec sweet herb)).